Reading from the N-terminus, the 1182-residue chain is Protein patched homolog 2 (1182 aa).

The Cytoplasmic portion of the chain corresponds to 1-57 (MVRPLSLGELPPSYTPPARSSAPHILAGSLQAPLWLRAYFQGLLFSLGCRIQKHCGK). The helical transmembrane segment at 58 to 78 (VLFLGLVAFGALALGLRVAVI) threads the bilayer. Residues 79-394 (ETDLEQLWVE…DILRAFSEVS (316 aa)) are Extracellular-facing. N-linked (GlcNAc...) asparagine glycosylation occurs at N370. In terms of domain architecture, SSD spans 394 to 552 (STTRVVGGYL…MLVFPAILSL (159 aa)). The helical transmembrane segment at 395 to 414 (TTRVVGGYLLMLAYACVTML) threads the bilayer. The Cytoplasmic portion of the chain corresponds to 415-428 (RWDCAQSQGAVGLA). A helical transmembrane segment spans residues 429–449 (GVLLVALAVASGLGLCALLGI). Residues 450–457 (TFNAATTQ) are Extracellular-facing. A helical membrane pass occupies residues 458–478 (VLPFLALGIGVDDIFLLAHAF). The Cytoplasmic portion of the chain corresponds to 479-501 (TKAPPDTPLPERMGECLRSTGTS). The chain crosses the membrane as a helical span at residues 502–522 (VALTSVNNMVAFFMAALVPIP). Over 523 to 531 (ALRAFSLQA) the chain is Extracellular. Residues 532–552 (AIVVGCNFAAVMLVFPAILSL) traverse the membrane as a helical segment. Topologically, residues 553–686 (DLRRRHRQRL…APLLLQTRAK (134 aa)) are cytoplasmic. The helical transmembrane segment at 687–707 (ALVLLFFGALLGLSLYGATLV) threads the bilayer. Residues 708-963 (QDGLALTDVV…WEQYLGLRRC (256 aa)) lie on the Extracellular side of the membrane. The N-linked (GlcNAc...) asparagine glycan is linked to N812. The chain crosses the membrane as a helical span at residues 964–984 (FLLAVCILLVCTFLVCALLLL). The Cytoplasmic portion of the chain corresponds to 985–991 (SPWTAGL). The helical transmembrane segment at 992–1012 (IVLVLAMMTVELFGIMGFLGI) threads the bilayer. Position 1013 (K1013) is a topological domain, extracellular. A helical membrane pass occupies residues 1014–1034 (LSAIPVVILVASIGIGVEFTV). The Cytoplasmic segment spans residues 1035–1064 (HVALGFLTSHGSRNLRAASALEQTFAPVTD). A helical transmembrane segment spans residues 1065 to 1085 (GAVSTLLGLLMLAGSNFDFII). Residue R1086 is a topological domain, extracellular. A helical transmembrane segment spans residues 1087–1107 (YFFVVLTVLTLLGLLHGLLLL). The Cytoplasmic portion of the chain corresponds to 1108–1182 (PVLLSILGPP…YVHPASEEPT (75 aa)).

Belongs to the patched family. In terms of tissue distribution, expressed in epithelial cells of the developing hair, tooth and whisker.

The protein localises to the membrane. Plays a role in the control of cellular growth. May have a role in epidermal development. May act as a receptor for Sonic hedgehog (SHH). This Mus musculus (Mouse) protein is Protein patched homolog 2 (Ptch2).